The following is an 839-amino-acid chain: Enhancer of polycomb-like protein 1 (839 aa).

4 disordered regions span residues 350–379 (QKKR…AGSA), 393–415 (GSGS…PSKI), 608–640 (LADR…ISSD), and 679–839 (QQQQ…KVDA). Residues 608 to 620 (LADRQKYDRETEP) are compositionally biased toward basic and acidic residues. Positions 621–640 (TRQMSSYDKDPSQLNGISSD) are enriched in polar residues. A compositionally biased stretch (low complexity) spans 679–690 (QQQQQQMRNRQQ). A compositionally biased stretch (gly residues) spans 697 to 713 (PGAGLGGGQGAGGGAGG). A compositionally biased stretch (polar residues) spans 714 to 730 (SRNNSPAPGTNGPQSKM). Low complexity predominate over residues 747–786 (QHQQYQQMQQQQQQQQQQQQQRKMGVAPMNAASAAAAMAA). Residues 828–839 (MKQKSELAKVDA) show a composition bias toward basic and acidic residues.

Belongs to the enhancer of polycomb family. In terms of assembly, component of the NuA4 histone acetyltransferase complex.

It localises to the nucleus. Its function is as follows. Component of the NuA4 histone acetyltransferase complex which is involved in transcriptional activation of selected genes principally by acetylation of nucleosomal histone H4 and H2A. The NuA4 complex is also involved in DNA repair. Involved in gene silencing by neighboring heterochromatin, blockage of the silencing spreading along the chromosome, and required for cell cycle progression through G2/M. The sequence is that of Enhancer of polycomb-like protein 1 (EPL1) from Yarrowia lipolytica (strain CLIB 122 / E 150) (Yeast).